We begin with the raw amino-acid sequence, 578 residues long: MNLHTLLLNKFRTALVAIGAPENSPAPLSRATKVGFGDYQFNGAMALAKVLKQKPRDIAEKIVEAVELDGIAEKLEVAGPGFINIYLSKEWLAAQLSHAAADPRLNIESQPTKTVVVDYSSPNLAKEMHVGHLRTTIIGDAVVKALEFMGHKVIRQNHMGDWGTQFGMLLAHLNDKLESNQVAETALSDLEDFYREAKVRFDEEEGFADRAREYVVKLQGGDSHCLALWQNFIDVSITHSEEVYHKLNVSLTRDDIMGESAYNHDLANVVSELQAKGLAVESQGAQVVFLPELADKEGNPAAYIVQKSGGGYLYATTDLAAIRHRNKQLHADRTLILTDARQALHFKQTELVARKAGFIEPEQTYEHCPFGMMLGNDGRPFKTRTGGTVKLVELLDEAVERAETLLSKRETDLSSDELKVLANKIGIGAVKYADLSKNRTTDYMFSWDSMLSFEGNTAPYLQYAYTRVMSIFRKAGVDHQTLNAPISLDAPQEKILAVKQLQYVEAINQVIAEGTPHVLCTYLYELASLFMSFYEACPMLKDGIEQDVRDSRMTLAALTAKTLQSGLSLLGIDTMERM.

The short motif at 122-132 is the 'HIGH' region element; the sequence is PNLAKEMHVGH.

This sequence belongs to the class-I aminoacyl-tRNA synthetase family. In terms of assembly, monomer.

It is found in the cytoplasm. The enzyme catalyses tRNA(Arg) + L-arginine + ATP = L-arginyl-tRNA(Arg) + AMP + diphosphate. The polypeptide is Arginine--tRNA ligase (Pseudoalteromonas atlantica (strain T6c / ATCC BAA-1087)).